Reading from the N-terminus, the 1088-residue chain is Probable cellulose synthase A catalytic subunit 9 [UDP-forming] (1088 aa).

M1 bears the N-acetylmethionine mark. Over 1–283 the chain is Cytoplasmic; that stretch reads MNTGGRLIAG…RSSRINPYRM (283 aa). Positions 39, 42, 58, 61, 66, 69, 81, and 84 each coordinate Zn(2+). The segment at 39 to 85 adopts an RING-type; degenerate zinc-finger fold; it reads CKICRDEIELTDNGEPFIACNECAFPTCRPCYEYERREGNQACPQCG. Residues 284–304 form a helical membrane-spanning segment; sequence LIFCRLAILGLFFHYRILHPV. At 305 to 306 the chain is on the extracellular side; sequence ND. A helical membrane pass occupies residues 307–327; sequence AFGLWLTSVICEIWFAVSWIL. Topologically, residues 328-871 are cytoplasmic; it reads DQFPKWYPIE…INSVVYPWTS (544 aa). UDP-alpha-D-glucose contacts are provided by S366, K372, E373, D402, and K543. Residue D402 is part of the active site. 2 residues coordinate Mn(2+): K544 and D568. Residue D788 is part of the active site. A helical membrane pass occupies residues 872 to 892; the sequence is LPLLVYCSLPAICLLTGKFIV. Residues 893 to 897 are Extracellular-facing; sequence PEISN. A helical transmembrane segment spans residues 898–918; the sequence is YAGILFLLMFMSIAVTGILEM. Residues 919–933 lie on the Cytoplasmic side of the membrane; the sequence is QWGKIGIDDWWRNEQ. A helical transmembrane segment spans residues 934 to 954; the sequence is FWVIGGVSSHLFALFQGLLKV. Topologically, residues 955–983 are extracellular; it reads LAGVSTNFTVTSKAADDGEFSELYIFKWT. N-linked (GlcNAc...) asparagine glycosylation is present at N961. Residues 984–1004 traverse the membrane as a helical segment; that stretch reads SLLIPPTTLLIINIVGVIVGV. Residues 1005 to 1015 are Cytoplasmic-facing; it reads SDAINNGYDSW. The helical transmembrane segment at 1016 to 1036 threads the bilayer; sequence GPLFGRLFFALWVIVHLYPFL. Over 1037-1045 the chain is Extracellular; the sequence is KGLLGKQDR. Residues 1046–1066 traverse the membrane as a helical segment; sequence VPTIILVWSILLASILTLLWV. Over 1067 to 1088 the chain is Cytoplasmic; the sequence is RVNPFVSKDGPVLEICGLDCLK.

The protein belongs to the glycosyltransferase 2 family. Plant cellulose synthase subfamily. It depends on Mn(2+) as a cofactor. The cofactor is Zn(2+). In terms of tissue distribution, expressed in young plants, stems and flowers.

Its subcellular location is the cell membrane. It carries out the reaction [(1-&gt;4)-beta-D-glucosyl](n) + UDP-alpha-D-glucose = [(1-&gt;4)-beta-D-glucosyl](n+1) + UDP + H(+). The protein operates within glycan metabolism; plant cellulose biosynthesis. Functionally, probable catalytic subunit of cellulose synthase terminal complexes ('rosettes'), required for beta-1,4-glucan microfibril crystallization, a major mechanism of the cell wall formation. This chain is Probable cellulose synthase A catalytic subunit 9 [UDP-forming], found in Arabidopsis thaliana (Mouse-ear cress).